The following is a 234-amino-acid chain: Putative methyltransferase-like protein 15P1 (234 aa).

Residues 100-102, Asp119, Phe146, Asp169, and Gln176 contribute to the S-adenosyl-L-methionine site; that span reads GGH.

This sequence belongs to the methyltransferase superfamily. RsmH family.

Functionally, probable S-adenosyl-L-methionine-dependent methyltransferase. In Homo sapiens (Human), this protein is Putative methyltransferase-like protein 15P1 (METTL15P1).